The chain runs to 416 residues: Heat shock protein DDB_G0280215 (416 aa).

One can recognise a sHSP domain in the interval 37-150 (SMDWGWKPRM…SQHISLFGRE (114 aa)). The segment at 216 to 235 (ETKERERRIRDTKGETEKKK) is disordered.

The protein belongs to the small heat shock protein (HSP20) family.

In Dictyostelium discoideum (Social amoeba), this protein is Heat shock protein DDB_G0280215.